A 258-amino-acid chain; its full sequence is 5'-nucleotidase SurE (258 aa).

Positions 9, 10, 42, and 96 each coordinate a divalent metal cation.

Belongs to the SurE nucleotidase family. Requires a divalent metal cation as cofactor.

The protein localises to the cytoplasm. It catalyses the reaction a ribonucleoside 5'-phosphate + H2O = a ribonucleoside + phosphate. Nucleotidase that shows phosphatase activity on nucleoside 5'-monophosphates. The chain is 5'-nucleotidase SurE from Campylobacter jejuni subsp. jejuni serotype O:23/36 (strain 81-176).